A 486-amino-acid chain; its full sequence is UDP-N-acetylglucosamine pyrophosphorylase (486 aa).

A Substrate binding motif is present at residues 109–112 (MAGG). UTP-binding positions include 109–112 (MAGG), Lys-123, Gln-199, and Gly-226. Position 227 (Asn-227) interacts with substrate. Asp-257 contributes to the UTP binding site. Positions 309 to 310 (EY) match the Substrate binding motif. Residue Lys-389 coordinates UTP. Position 421 (Lys-421) interacts with substrate.

It belongs to the UDPGP type 1 family.

The protein resides in the cytoplasm. It catalyses the reaction N-acetyl-alpha-D-glucosamine 1-phosphate + UTP + H(+) = UDP-N-acetyl-alpha-D-glucosamine + diphosphate. The protein operates within nucleotide-sugar biosynthesis; UDP-N-acetyl-alpha-D-glucosamine biosynthesis; UDP-N-acetyl-alpha-D-glucosamine from N-acetyl-alpha-D-glucosamine 1-phosphate: step 1/1. The chain is UDP-N-acetylglucosamine pyrophosphorylase (UAP1) from Candida albicans (Yeast).